The sequence spans 205 residues: Adenylyl-sulfate kinase (205 aa).

An ATP-binding site is contributed by 31–38; sequence GLSGAGKS. Catalysis depends on S105, which acts as the Phosphoserine intermediate.

It belongs to the APS kinase family.

It catalyses the reaction adenosine 5'-phosphosulfate + ATP = 3'-phosphoadenylyl sulfate + ADP + H(+). It participates in sulfur metabolism; hydrogen sulfide biosynthesis; sulfite from sulfate: step 2/3. Its function is as follows. Catalyzes the synthesis of activated sulfate. This Shewanella putrefaciens (strain CN-32 / ATCC BAA-453) protein is Adenylyl-sulfate kinase.